Here is a 156-residue protein sequence, read N- to C-terminus: MSSNKINKKSIARIAAVQAIYQNILQNNDDMDDIMQNVLSFYQNNNSTTALPENLKISLSISHFKMLVKSVFENINKLDEIIDNHLTNDKDPAHMPILLRALLRVSICELLFCPTTPAKVVINEYTDIANDMLNEHEIGFVNSILDKIAQENNKIS.

It belongs to the NusB family.

Its function is as follows. Involved in transcription antitermination. Required for transcription of ribosomal RNA (rRNA) genes. Binds specifically to the boxA antiterminator sequence of the ribosomal RNA (rrn) operons. This is Transcription antitermination protein NusB from Rickettsia felis (strain ATCC VR-1525 / URRWXCal2) (Rickettsia azadi).